We begin with the raw amino-acid sequence, 536 residues long: Chaperonin GroEL 2 (536 aa).

Residues 29–32 (TLGP), lysine 50, glycine 416, and aspartate 497 contribute to the ATP site.

Belongs to the chaperonin (HSP60) family. As to quaternary structure, forms a cylinder of 14 subunits composed of two heptameric rings stacked back-to-back. Interacts with the co-chaperonin GroES.

It is found in the cytoplasm. It carries out the reaction ATP + H2O + a folded polypeptide = ADP + phosphate + an unfolded polypeptide.. In terms of biological role, together with its co-chaperonin GroES, plays an essential role in assisting protein folding. The GroEL-GroES system forms a nano-cage that allows encapsulation of the non-native substrate proteins and provides a physical environment optimized to promote and accelerate protein folding. The chain is Chaperonin GroEL 2 from Chlamydia caviae (strain ATCC VR-813 / DSM 19441 / 03DC25 / GPIC) (Chlamydophila caviae).